The chain runs to 331 residues: FMRFamide-related neuropeptides (331 aa).

A signal peptide spans 1–25 (MRCWSPCSLLVVIVIYCLSSHTSEA). A propeptide spanning residues 26 to 65 (FDLAQACVESQRLSLLPICDTIFAVQQEGVQQSADDGMRS) is cleaved from the precursor. F71 and F83 each carry phenylalanine amide. Residues 86-94 (NVPDLPFED) constitute a propeptide that is removed on maturation. Residue F100 is modified to Phenylalanine amide. Positions 103 to 168 (AAPQLDELLK…YIDDVEDSDV (66 aa)) are excised as a propeptide. Positions 122–158 (QKADETSVRRKRSTDAAPQNNAENPEQKNDSAKITKR) are disordered. Basic and acidic residues predominate over residues 146–158 (PEQKNDSAKITKR). A phenylalanine amide mark is found at F174 and F181. The propeptide occupies 184 to 194 (NPSDVGNKLTE). F200 bears the Phenylalanine amide mark. A propeptide spanning residues 203–205 (DPE) is cleaved from the precursor. F211 carries the post-translational modification Phenylalanine amide. Residues 214–216 (SDD) constitute a propeptide that is removed on maturation. F222 is modified (phenylalanine amide). Positions 225–236 (NPSDAEDELEED) are excised as a propeptide. At F242 the chain carries Phenylalanine amide. A propeptide spanning residues 245–254 (GGEDDEEEAE) is cleaved from the precursor. A Phenylalanine amide modification is found at F260. Positions 263–265 (DPE) are excised as a propeptide. Phenylalanine amide is present on F271. Residues 274 to 277 (SGED) constitute a propeptide that is removed on maturation. The segment covering 279–296 (RFMRFGRNPDEQEADKRF) has biased composition (basic and acidic residues). A disordered region spans residues 279–310 (RFMRFGRNPDEQEADKRFMRFGRGGEDDEVST). A Phenylalanine amide modification is found at F283. Positions 286-293 (NPDEQEAD) are excised as a propeptide. F299 carries the phenylalanine amide modification. The propeptide occupies 302-312 (GGEDDEVSTED). F318 is subject to Phenylalanine amide. Positions 321–331 (SADKCKGCLEG) are excised as a propeptide.

It belongs to the FARP (FMRFamide related peptide) family.

The protein resides in the secreted. Excitatory neurotransmitters that directly modulate chromatophore function by activating chromatophore expansion at the chromatophore neuromuscular junction. This Doryteuthis opalescens (California market squid) protein is FMRFamide-related neuropeptides.